Here is a 409-residue protein sequence, read N- to C-terminus: Peptidase T (409 aa).

Histidine 78 lines the Zn(2+) pocket. Aspartate 80 is an active-site residue. Aspartate 140 lines the Zn(2+) pocket. Glutamate 173 functions as the Proton acceptor in the catalytic mechanism. Positions 174, 196, and 379 each coordinate Zn(2+).

The protein belongs to the peptidase M20B family. Zn(2+) is required as a cofactor.

The protein resides in the cytoplasm. It carries out the reaction Release of the N-terminal residue from a tripeptide.. In terms of biological role, cleaves the N-terminal amino acid of tripeptides. The polypeptide is Peptidase T (Salmonella choleraesuis (strain SC-B67)).